A 360-amino-acid polypeptide reads, in one-letter code: Phenylalanine--tRNA ligase alpha subunit (360 aa).

Residue glutamate 260 coordinates Mg(2+).

This sequence belongs to the class-II aminoacyl-tRNA synthetase family. Phe-tRNA synthetase alpha subunit type 1 subfamily. In terms of assembly, tetramer of two alpha and two beta subunits. The cofactor is Mg(2+).

The protein localises to the cytoplasm. It catalyses the reaction tRNA(Phe) + L-phenylalanine + ATP = L-phenylalanyl-tRNA(Phe) + AMP + diphosphate + H(+). In Bradyrhizobium sp. (strain BTAi1 / ATCC BAA-1182), this protein is Phenylalanine--tRNA ligase alpha subunit.